Here is a 295-residue protein sequence, read N- to C-terminus: Nucleotide-binding protein BLi03725/BL03417 (295 aa).

16–23 (GMSGAGKT) lines the ATP pocket. Residue 67-70 (DLRG) coordinates GTP.

Belongs to the RapZ-like family.

In terms of biological role, displays ATPase and GTPase activities. This Bacillus licheniformis (strain ATCC 14580 / DSM 13 / JCM 2505 / CCUG 7422 / NBRC 12200 / NCIMB 9375 / NCTC 10341 / NRRL NRS-1264 / Gibson 46) protein is Nucleotide-binding protein BLi03725/BL03417.